The following is a 152-amino-acid chain: Large ribosomal subunit protein bL9 (152 aa).

This sequence belongs to the bacterial ribosomal protein bL9 family.

Its function is as follows. Binds to the 23S rRNA. This chain is Large ribosomal subunit protein bL9, found in Prochlorococcus marinus (strain MIT 9313).